Reading from the N-terminus, the 342-residue chain is S-adenosylmethionine:tRNA ribosyltransferase-isomerase (342 aa).

Belongs to the QueA family. As to quaternary structure, monomer.

The protein localises to the cytoplasm. The enzyme catalyses 7-aminomethyl-7-carbaguanosine(34) in tRNA + S-adenosyl-L-methionine = epoxyqueuosine(34) in tRNA + adenine + L-methionine + 2 H(+). The protein operates within tRNA modification; tRNA-queuosine biosynthesis. Its function is as follows. Transfers and isomerizes the ribose moiety from AdoMet to the 7-aminomethyl group of 7-deazaguanine (preQ1-tRNA) to give epoxyqueuosine (oQ-tRNA). The sequence is that of S-adenosylmethionine:tRNA ribosyltransferase-isomerase from Zymomonas mobilis subsp. mobilis (strain ATCC 31821 / ZM4 / CP4).